A 313-amino-acid polypeptide reads, in one-letter code: Protoheme IX farnesyltransferase (313 aa).

9 consecutive transmembrane segments (helical) span residues 35 to 55, 56 to 76, 98 to 118, 120 to 140, 153 to 173, 180 to 200, 226 to 246, 248 to 268, and 292 to 312; these read LVVF…HPVL, AATS…LNMW, VSSP…VATL, VLVN…YAVV, IVIG…AATG, IILF…LALF, ILLY…LGYF, AAYG…AFNV, and LFLL…AAMI.

It belongs to the UbiA prenyltransferase family. Protoheme IX farnesyltransferase subfamily.

It is found in the cell inner membrane. It catalyses the reaction heme b + (2E,6E)-farnesyl diphosphate + H2O = Fe(II)-heme o + diphosphate. It participates in porphyrin-containing compound metabolism; heme O biosynthesis; heme O from protoheme: step 1/1. Converts heme B (protoheme IX) to heme O by substitution of the vinyl group on carbon 2 of heme B porphyrin ring with a hydroxyethyl farnesyl side group. This is Protoheme IX farnesyltransferase from Afipia carboxidovorans (strain ATCC 49405 / DSM 1227 / KCTC 32145 / OM5) (Oligotropha carboxidovorans).